The primary structure comprises 205 residues: Putative 3-methyladenine DNA glycosylase (205 aa).

This sequence belongs to the DNA glycosylase MPG family.

This chain is Putative 3-methyladenine DNA glycosylase, found in Clostridium perfringens (strain 13 / Type A).